Here is a 375-residue protein sequence, read N- to C-terminus: Muconate cycloisomerase 1 (375 aa).

Catalysis depends on K171, which acts as the Proton acceptor. Mn(2+) is bound by residues D200, E226, and D251. The active-site Proton donor is the E329.

Belongs to the mandelate racemase/muconate lactonizing enzyme family. As to quaternary structure, homooctamer. The cofactor is Mn(2+).

The catalysed reaction is (S)-muconolactone = cis,cis-muconate + H(+). It functions in the pathway aromatic compound metabolism; beta-ketoadipate pathway; 5-oxo-4,5-dihydro-2-furylacetate from catechol: step 2/3. Its function is as follows. Catalyzes a syn cycloisomerization. This chain is Muconate cycloisomerase 1 (catB), found in Pseudomonas putida (Arthrobacter siderocapsulatus).